The following is a 329-amino-acid chain: Malate dehydrogenase (329 aa).

12-18 contacts NAD(+); sequence GAAGQIG. Substrate-binding residues include arginine 93 and arginine 99. Residues asparagine 106, glutamine 113, and 130–132 contribute to the NAD(+) site; that span reads TGN. Residues asparagine 132 and arginine 163 each coordinate substrate. The active-site Proton acceptor is histidine 188.

Belongs to the LDH/MDH superfamily. MDH type 2 family.

It catalyses the reaction (S)-malate + NAD(+) = oxaloacetate + NADH + H(+). Catalyzes the reversible oxidation of malate to oxaloacetate. This is Malate dehydrogenase from Mycobacterium avium (strain 104).